The following is a 168-amino-acid chain: GTP-dependent dephospho-CoA kinase (168 aa).

Residues Asp-49, Val-50, Val-51, Asp-68, Lys-70, and Glu-120 each coordinate GTP.

It belongs to the GTP-dependent DPCK family.

It carries out the reaction 3'-dephospho-CoA + GTP = GDP + CoA + H(+). The protein operates within cofactor biosynthesis; coenzyme A biosynthesis. In terms of biological role, catalyzes the GTP-dependent phosphorylation of the 3'-hydroxyl group of dephosphocoenzyme A to form coenzyme A (CoA). In Pyrobaculum calidifontis (strain DSM 21063 / JCM 11548 / VA1), this protein is GTP-dependent dephospho-CoA kinase.